The primary structure comprises 419 residues: CinA-like protein (419 aa).

Belongs to the CinA family.

The chain is CinA-like protein from Picosynechococcus sp. (strain ATCC 27264 / PCC 7002 / PR-6) (Agmenellum quadruplicatum).